The sequence spans 206 residues: N-(5'-phosphoribosyl)anthranilate isomerase (206 aa).

This sequence belongs to the TrpF family.

The catalysed reaction is N-(5-phospho-beta-D-ribosyl)anthranilate = 1-(2-carboxyphenylamino)-1-deoxy-D-ribulose 5-phosphate. It functions in the pathway amino-acid biosynthesis; L-tryptophan biosynthesis; L-tryptophan from chorismate: step 3/5. The chain is N-(5'-phosphoribosyl)anthranilate isomerase from Chlamydia felis (strain Fe/C-56) (Chlamydophila felis).